A 535-amino-acid polypeptide reads, in one-letter code: MVNIILLIVSALIGLILGYALISIRLKSAKEAAELTLLNAEQEAVDIRGKAEVDAEHIKKTAKRESKANRKELLLEAKEEARKYREEIEQEFKSERQELKQLETRLAERSLTLDRKDENLSSKEKVLDSKEQSLTDKSKHIDERQLQVEKLEEEKKAELEKVAAMTIAEAREVILMETENKLTHEIATRIRDAERDIKDRTVKTAKDLLAQAMQRLAGEYVTEQTITSVHLPDDNMKGRIIGREGRNIRTLESLTGIDVIIDDTPEVVILSGFDPIRREIARMTLESLIADGRIHPARIEELVEKNRLEMDNRIREYGEAAAYEIGAPNLHPDLIKIMGRLQFRTSFGQNVLRHSVEVGKLAGILAGELGENVALARRAGFLHDMGKAIDREVEGSHVEIGMEFARKYKEHPVVVNTIASHHGDVEPDSVIAVLVAAADALSSARPGARNESMENYIKRLRDLEEIATSFDGVQNSFALQAGREIRIMVQPEKISDDQVVILSHKVREKIEHNLDYPGNIKVTVIREMRAVDYAK.

Residues 4–24 traverse the membrane as a helical segment; sequence IILLIVSALIGLILGYALISI. Positions 118 to 141 are disordered; sequence ENLSSKEKVLDSKEQSLTDKSKHI. One can recognise a KH domain in the interval 225–285; the sequence is TITSVHLPDD…IRREIARMTL (61 aa). Positions 351-444 constitute an HD domain; the sequence is VLRHSVEVGK…VAAADALSSA (94 aa).

It belongs to the RNase Y family.

It localises to the cell membrane. Endoribonuclease that initiates mRNA decay. The polypeptide is Ribonuclease Y (Streptococcus pyogenes serotype M18 (strain MGAS8232)).